The chain runs to 245 residues: Proteasome subunit alpha type-7-1B (245 aa).

This sequence belongs to the peptidase T1A family. As to quaternary structure, the 26S proteasome consists of a 20S proteasome core and two 19S regulatory subunits. The 20S proteasome core is composed of 28 subunits that are arranged in four stacked rings, resulting in a barrel-shaped structure. The two end rings are each formed by seven alpha subunits, and the two central rings are each formed by seven beta subunits. The catalytic chamber with the active sites is on the inside of the barrel. In terms of tissue distribution, testis specific.

It is found in the cytoplasm. Its subcellular location is the nucleus. The proteasome is a multicatalytic proteinase complex which is characterized by its ability to cleave peptides with Arg, Phe, Tyr, Leu, and Glu adjacent to the leaving group at neutral or slightly basic pH. The proteasome has an ATP-dependent proteolytic activity. In Drosophila virilis (Fruit fly), this protein is Proteasome subunit alpha type-7-1B (Pros28.1B).